Reading from the N-terminus, the 385-residue chain is MVGFGAPRRTGRLPPFVLVALLAVIGLLAFNYWSVSARQAALHDELLGLQAQVQRTEVARSRLEKRNSELMMQSDSHRRQIEQKQGEYQGLGERLQARDIQAQRCELDKSKLQNNVSLQMADISHLKEQLAELRHEFLRQEDQLHEYKNNNTFLQKSLQEESQQCAQQLAERKREYEENLTKQKEELDKQPQKDEEEGGTVDNKMHILPSEVKEKIEDPSSNRLPFAQDGIKLESDAGMPEIEDNEPAKEDSLQNDVKGQDTGALPSQSKSLLEKQPSLQPLSFTEHEVKKPLPDKKETVQIPEVEENALQLEPHPLKQMPRDSKTMSFNLKQSRFFDENESPVDPQHGSKVADYNGDDGNVEDDDHDGQADAGEYHKDHLNETL.

At 1–12 (MVGFGAPRRTGR) the chain is on the cytoplasmic side. Residues 13 to 33 (LPPFVLVALLAVIGLLAFNYW) form a helical; Signal-anchor for type II membrane protein membrane-spanning segment. At 34 to 385 (SVSARQAALH…YHKDHLNETL (352 aa)) the chain is on the lumenal side. Residues 44 to 193 (DELLGLQAQV…KEELDKQPQK (150 aa)) adopt a coiled-coil conformation. Positions 169 to 385 (LAERKREYEE…YHKDHLNETL (217 aa)) are disordered. Basic and acidic residues-rich tracts occupy residues 170–193 (AERK…QPQK) and 211–220 (EVKEKIEDPS). Residues 265–283 (LPSQSKSLLEKQPSLQPLS) show a composition bias toward polar residues. Over residues 285–299 (TEHEVKKPLPDKKET) the composition is skewed to basic and acidic residues. The span at 356-367 (NGDDGNVEDDDH) shows a compositional bias: acidic residues. Residues 368–385 (DGQADAGEYHKDHLNETL) show a composition bias toward basic and acidic residues.

It belongs to the GOLM family.

The protein resides in the membrane. This Xenopus laevis (African clawed frog) protein is Protein GOLM2 (golm2).